The sequence spans 245 residues: 1-(5-phosphoribosyl)-5-[(5-phosphoribosylamino)methylideneamino] imidazole-4-carboxamide isomerase (245 aa).

The active-site Proton acceptor is the D11. Residue D132 is the Proton donor of the active site.

This sequence belongs to the HisA/HisF family.

The protein localises to the cytoplasm. It carries out the reaction 1-(5-phospho-beta-D-ribosyl)-5-[(5-phospho-beta-D-ribosylamino)methylideneamino]imidazole-4-carboxamide = 5-[(5-phospho-1-deoxy-D-ribulos-1-ylimino)methylamino]-1-(5-phospho-beta-D-ribosyl)imidazole-4-carboxamide. It participates in amino-acid biosynthesis; L-histidine biosynthesis; L-histidine from 5-phospho-alpha-D-ribose 1-diphosphate: step 4/9. The polypeptide is 1-(5-phosphoribosyl)-5-[(5-phosphoribosylamino)methylideneamino] imidazole-4-carboxamide isomerase (Bacillus licheniformis (strain ATCC 14580 / DSM 13 / JCM 2505 / CCUG 7422 / NBRC 12200 / NCIMB 9375 / NCTC 10341 / NRRL NRS-1264 / Gibson 46)).